The following is a 324-amino-acid chain: Taste receptor type 2 member 116 (324 aa).

Topologically, residues 1–2 (MN) are extracellular. A helical membrane pass occupies residues 3 to 23 (GVLYITFTVILSVEVIIGNFG). Residues 24–55 (NGIIALVNIMDLAKRRKISSVDQILTALAISR) lie on the Cytoplasmic side of the membrane. The chain crosses the membrane as a helical span at residues 56–76 (IVLLWLVLVSWWLSMFYPGQW). Over 77–94 (MTEGIDVIVHNVWTTLNQ) the chain is Extracellular. A helical membrane pass occupies residues 95–115 (ISLWLATSFSVFCFLKVANFS). The Cytoplasmic segment spans residues 116–128 (NTIFFYLKIRVKK). The chain crosses the membrane as a helical span at residues 129–149 (VMTGTLIMFLLLLGLNIIVIN). Topologically, residues 150–183 (ASKTILIPEYKVNMSNSLNLKNTQISMLFPFANT) are extracellular. The N-linked (GlcNAc...) asparagine glycan is linked to asparagine 162. Residues 184-204 (LFGFIPFAVSLVTFLLLFFSL) form a helical membrane-spanning segment. The Cytoplasmic portion of the chain corresponds to 205–236 (WKHQRKMHHGAQGCRDSSTKAHIRVLQTLIAS). A helical membrane pass occupies residues 237 to 257 (ILLYFVFFLSLVVKVWISLFL). Residues 258–261 (ERML) are Extracellular-facing. Residues 262 to 282 (LLLITQAAKIAFPSLHPWVLI) form a helical membrane-spanning segment. Residues 283–324 (LGNAKLRKASLSALQWLRCRHKDEHRRVQRPEVHSCGSSCMP) are Cytoplasmic-facing.

This sequence belongs to the G-protein coupled receptor T2R family.

It localises to the membrane. Functionally, putative taste receptor which may play a role in the perception of bitterness. This Rattus norvegicus (Rat) protein is Taste receptor type 2 member 116.